Consider the following 459-residue polypeptide: MNRLPSSASALACSAHALNLIEKRTLDHEEMKALNREVIEYFKEHVNPGFLEYRKSVTAGGDYGAVEWQAGSLNTLVDTQGQEFIDCLGGFGIFNVGHRNPVVVSAVQNQLAKQPLHSQELLDPLRAMLAKTLAALTPGKLKYSFFCNSGTESVEAALKLAKAYQSPRGKFTFIATSGAFHGKSLGALSATAKSTFRKPFMPLLPGFRHVPFGNIEAMRTALNECKKTGDDVAAVILEPIQGEGGVILPPPGYLTAVRKLCDEFGALMILDEVQTGMGRTGKMFACEHENVQPDILCLAKALGGGVMPIGATIATEEVFSVLFDNPFLHTTTFGGNPLTCAAALATINVLLEQNLPAQAEQKGDMLLDGFRQLAREYPDLVQEARGKGMLMAIEFVDNEIGYNFASEMFRQRVLVAGTLNNAKTIRIEPPLTLTIEQCELVIKAARKALAAMRVSVEEA.

Residues 150 to 151 (GT) and Q274 each bind pyridoxal 5'-phosphate. K300 is modified (N6-(pyridoxal phosphate)lysine). T332 serves as a coordination point for pyridoxal 5'-phosphate.

This sequence belongs to the class-III pyridoxal-phosphate-dependent aminotransferase family. Putrescine aminotransferase subfamily. It depends on pyridoxal 5'-phosphate as a cofactor.

The enzyme catalyses an alkane-alpha,omega-diamine + 2-oxoglutarate = an omega-aminoaldehyde + L-glutamate. It carries out the reaction putrescine + 2-oxoglutarate = 1-pyrroline + L-glutamate + H2O. It catalyses the reaction cadaverine + 2-oxoglutarate = 5-aminopentanal + L-glutamate. It participates in amine and polyamine degradation; putrescine degradation; 4-aminobutanal from putrescine (transaminase route): step 1/1. Functionally, catalyzes the aminotransferase reaction from putrescine to 2-oxoglutarate, leading to glutamate and 4-aminobutanal, which spontaneously cyclizes to form 1-pyrroline. This is the first step in one of two pathways for putrescine degradation, where putrescine is converted into 4-aminobutanoate (gamma-aminobutyrate or GABA) via 4-aminobutanal. Also functions as a cadaverine transaminase in a a L-lysine degradation pathway to succinate that proceeds via cadaverine, glutarate and L-2-hydroxyglutarate. This chain is Putrescine aminotransferase, found in Escherichia coli O7:K1 (strain IAI39 / ExPEC).